A 317-amino-acid polypeptide reads, in one-letter code: uncharacterized protein (317 aa).

Residues 68-78 (DSTNTDISNET) show a composition bias toward low complexity. Residues 68–87 (DSTNTDISNETPILSNNTPI) are disordered.

This is an uncharacterized protein from Methanocaldococcus jannaschii (strain ATCC 43067 / DSM 2661 / JAL-1 / JCM 10045 / NBRC 100440) (Methanococcus jannaschii).